The chain runs to 407 residues: Aminomethyltransferase, mitochondrial (407 aa).

A mitochondrion-targeting transit peptide spans 1-29; the sequence is MRGGLWQLGQSITRRLGQSDKKTIVRRCY. Substrate-binding residues include Glu234, Arg265, and Tyr403.

It belongs to the GcvT family. As to quaternary structure, the glycine cleavage system is composed of four proteins: P, T, L and H.

It localises to the mitochondrion. The enzyme catalyses N(6)-[(R)-S(8)-aminomethyldihydrolipoyl]-L-lysyl-[protein] + (6S)-5,6,7,8-tetrahydrofolate = N(6)-[(R)-dihydrolipoyl]-L-lysyl-[protein] + (6R)-5,10-methylene-5,6,7,8-tetrahydrofolate + NH4(+). In terms of biological role, the glycine cleavage system catalyzes the degradation of glycine. The sequence is that of Aminomethyltransferase, mitochondrial (GDCST) from Flaveria anomala (Yellowtops).